Reading from the N-terminus, the 625-residue chain is Sorting nexin-41 (625 aa).

Residues 1-90 form a disordered region; it reads MDYNIFEAVH…STSSHAVVEA (90 aa). Positions 54 to 86 are enriched in low complexity; that stretch reads SPPSSSSLPSSPAHSSSAGSSRASTSSSTSSHA. One can recognise a PX domain in the interval 98-235; sequence VSLSMSTTAT…QKFLNPEFNW (138 aa). Residues Arg-153, Ser-155, Lys-179, and Arg-202 each coordinate a 1,2-diacyl-sn-glycero-3-phospho-(1D-myo-inositol-3-phosphate). Coiled-coil stretches lie at residues 437-469 and 539-563; these read QFKI…NESL and QLTE…KDCL.

The protein belongs to the sorting nexin family. As to quaternary structure, binds to SNX4.

It is found in the prevacuolar compartment. The protein resides in the endosome. It localises to the endosome membrane. Its function is as follows. Involved in proper sorting of the v-SNARE protein SNC1. The protein is Sorting nexin-41 (SNX41) of Saccharomyces cerevisiae (strain ATCC 204508 / S288c) (Baker's yeast).